We begin with the raw amino-acid sequence, 97 residues long: MANNKSAKKRIKVAERNRLVNKSYKSTVKTLTKKTLANCEKYKLDPNSDNKNLVMFSLSEAFSLIDKAVKKNVLHKNNGANKKSKINKLVKNFLTSK.

Belongs to the bacterial ribosomal protein bS20 family.

Its function is as follows. Binds directly to 16S ribosomal RNA. The chain is Small ribosomal subunit protein bS20 from Prochlorococcus marinus (strain MIT 9515).